The primary structure comprises 263 residues: Small ribosomal subunit protein uS2 (263 aa).

The segment at 223-246 is disordered; that stretch reads KSLLEQDSDANADEAEVSQEEKDA. The span at 228-240 shows a compositional bias: acidic residues; that stretch reads QDSDANADEAEVS.

Belongs to the universal ribosomal protein uS2 family.

In Campylobacter curvus (strain 525.92), this protein is Small ribosomal subunit protein uS2.